The sequence spans 526 residues: Methane monooxygenase component A alpha chain (526 aa).

3 residues coordinate Fe cation: glutamate 114, glutamate 144, and histidine 147. Cysteine 151 is an active-site residue. Residues glutamate 209, glutamate 243, and histidine 246 each coordinate Fe cation.

Belongs to the TmoA/XamoA family. As to quaternary structure, m.trichosporium has two forms of methane monooxygenase, a soluble and a membrane-bound type. The soluble type consists of four components (A to D): protein A, comprising three chains, in an alpha-2, beta-2, gamma-2 configuration, is a nonheme iron protein containing an unusual mu-hydroxo bridge structure at its active site and interacts with both oxygen and methane. Fe cation serves as cofactor.

The catalysed reaction is methane + NADH + O2 + H(+) = methanol + NAD(+) + H2O. It catalyses the reaction methane + NADPH + O2 + H(+) = methanol + NADP(+) + H2O. Its function is as follows. Responsible for the initial oxygenation of methane to methanol in methanotrophs. It also catalyzes the monohydroxylation of a variety of unactivated alkenes, alicyclic, aromatic and heterocyclic compounds. The polypeptide is Methane monooxygenase component A alpha chain (mmoX) (Methylosinus trichosporium).